The chain runs to 370 residues: Cytochrome b (370 aa).

The next 4 membrane-spanning stretches (helical) occupy residues phenylalanine 25–isoleucine 45, tryptophan 69–isoleucine 90, tryptophan 105–leucine 125, and phenylalanine 170–isoleucine 190. Positions 75 and 89 each coordinate heme b. Heme b contacts are provided by histidine 174 and histidine 188. Histidine 193 is an a ubiquinone binding site. The next 4 membrane-spanning stretches (helical) occupy residues tyrosine 218–threonine 238, leucine 280–histidine 300, leucine 312–threonine 332, and phenylalanine 339–proline 358.

It belongs to the cytochrome b family. The cytochrome bc1 complex contains 3 respiratory subunits (MT-CYB, CYC1 and UQCRFS1), 2 core proteins (UQCRC1 and UQCRC2) and probably 6 low-molecular weight proteins. Requires heme b as cofactor.

It localises to the mitochondrion inner membrane. Functionally, component of the ubiquinol-cytochrome c reductase complex (complex III or cytochrome b-c1 complex) that is part of the mitochondrial respiratory chain. The b-c1 complex mediates electron transfer from ubiquinol to cytochrome c. Contributes to the generation of a proton gradient across the mitochondrial membrane that is then used for ATP synthesis. This Bungarus fasciatus (Banded krait) protein is Cytochrome b (MT-CYB).